Consider the following 216-residue polypeptide: Serine/threonine-protein phosphatase 1 (216 aa).

Asp-24, His-26, Asp-53, and Asn-79 together coordinate Mn(2+). His-80 (proton donor) is an active-site residue. His-185 is a binding site for Mn(2+).

Belongs to the PPP phosphatase family. PP-1 subfamily. It depends on Mn(2+) as a cofactor.

It catalyses the reaction O-phospho-L-seryl-[protein] + H2O = L-seryl-[protein] + phosphate. The enzyme catalyses O-phospho-L-threonyl-[protein] + H2O = L-threonyl-[protein] + phosphate. Its activity is regulated as follows. Inhibited by cadmium, copper, zinc when added cobalt when added concomitantly with manganese. In terms of biological role, can hydrolyze phosphorylated Ser-, Thr- or Tyr-substrates in vitro. The natural substrate is unknown. This chain is Serine/threonine-protein phosphatase 1 (pphA), found in Salmonella typhimurium (strain LT2 / SGSC1412 / ATCC 700720).